A 167-amino-acid polypeptide reads, in one-letter code: NADH-ubiquinone oxidoreductase chain 4 (167 aa).

A run of 3 helical transmembrane segments spans residues 2 to 22 (FIGATTLMIAHGLTSSLLFCL), 44 to 64 (LLPLAATWWLLASLTNLALPP), and 86 to 106 (IILVGLNTLITALYSLYMLIM).

This sequence belongs to the complex I subunit 4 family.

It is found in the mitochondrion membrane. The catalysed reaction is a ubiquinone + NADH + 5 H(+)(in) = a ubiquinol + NAD(+) + 4 H(+)(out). In terms of biological role, core subunit of the mitochondrial membrane respiratory chain NADH dehydrogenase (Complex I) that is believed to belong to the minimal assembly required for catalysis. Complex I functions in the transfer of electrons from NADH to the respiratory chain. The immediate electron acceptor for the enzyme is believed to be ubiquinone. This Carlito syrichta (Philippine tarsier) protein is NADH-ubiquinone oxidoreductase chain 4 (MT-ND4).